Here is a 228-residue protein sequence, read N- to C-terminus: Demethylmenaquinone methyltransferase (228 aa).

S-adenosyl-L-methionine contacts are provided by residues Thr-62, Asp-80, 100–101, and Ser-117; that span reads DA.

It belongs to the class I-like SAM-binding methyltransferase superfamily. MenG/UbiE family.

The catalysed reaction is a 2-demethylmenaquinol + S-adenosyl-L-methionine = a menaquinol + S-adenosyl-L-homocysteine + H(+). Its pathway is quinol/quinone metabolism; menaquinone biosynthesis; menaquinol from 1,4-dihydroxy-2-naphthoate: step 2/2. In terms of biological role, methyltransferase required for the conversion of demethylmenaquinol (DMKH2) to menaquinol (MKH2). The polypeptide is Demethylmenaquinone methyltransferase (Mycolicibacterium gilvum (strain PYR-GCK) (Mycobacterium gilvum (strain PYR-GCK))).